The primary structure comprises 103 residues: Cytochrome c55X (103 aa).

Residues 1 to 17 (MARLALLLVLLAGTAVA) form the signal peptide. Cysteine 36, cysteine 39, and histidine 40 together coordinate heme c.

Binds 1 heme c group covalently per subunit.

The protein resides in the periplasm. In terms of biological role, monoheme c-type cytochrome. This chain is Cytochrome c55X (nirC), found in Paracoccus denitrificans (strain Pd 1222).